The following is a 187-amino-acid chain: Dihydrofolate reductase (187 aa).

In terms of domain architecture, DHFR spans 4–185; that stretch reads PLNCIVAVSQ…IKYKFEVYEK (182 aa). Residues 8–37 form an involved in methotrexate binding region; sequence IVAVSQNMGIGKNGDFPWPMLRNEFKYFQR. NADP(+)-binding positions include Ala10 and 16–22; that span reads GIGKNGD. Residue 31–36 coordinates substrate; the sequence is EFKYFQ. Lys33 carries the post-translational modification N6-acetyllysine; alternate. Lys33 is subject to N6-succinyllysine; alternate. 55–57 contacts NADP(+); it reads RKT. Residues 60–70 form an involved in methotrexate binding region; sequence SIPEKNRPLKD. Arg71 provides a ligand contact to substrate. NADP(+) contacts are provided by residues 77-79 and 117-124; these read SRE and GGSSVYKE. Thr137 contacts methotrexate.

It belongs to the dihydrofolate reductase family. In terms of assembly, homodimer.

The protein resides in the mitochondrion. It is found in the cytoplasm. The catalysed reaction is (6S)-5,6,7,8-tetrahydrofolate + NADP(+) = 7,8-dihydrofolate + NADPH + H(+). It functions in the pathway cofactor biosynthesis; tetrahydrofolate biosynthesis; 5,6,7,8-tetrahydrofolate from 7,8-dihydrofolate: step 1/1. Its function is as follows. Key enzyme in folate metabolism. Contributes to the de novo mitochondrial thymidylate biosynthesis pathway. Catalyzes an essential reaction for de novo glycine and purine synthesis, and for DNA precursor synthesis. Binds its own mRNA. This is Dihydrofolate reductase (DHFR) from Mesocricetus auratus (Golden hamster).